Consider the following 199-residue polypeptide: Recombination protein RecR (199 aa).

The C4-type zinc finger occupies 58 to 73; it reads CRICYNITDTEVCNIC. The Toprim domain maps to 81-176; sequence SLICVVSHPM…KVTRIAHGVP (96 aa).

This sequence belongs to the RecR family.

In terms of biological role, may play a role in DNA repair. It seems to be involved in an RecBC-independent recombinational process of DNA repair. It may act with RecF and RecO. The chain is Recombination protein RecR from Thermoanaerobacter sp. (strain X514).